A 1411-amino-acid polypeptide reads, in one-letter code: MSLGDVKEQLRGSRTEAKNAAKLIQVQFERVRNGGTTSVALRALKYELNILRQLCCALQENFHQHADIYCDIAADMLPHVAPHLPQPDYWVNHLMSLQYIHHALCREQTIKQCQRFYELINAQSCQMQNKSEYKYYIDIHIRHVYFFGHQLGKQSAASEAKAQLCQALQALGKLLENMLQLKAEQNEGYSELMGELNQLLGKRSIGYLKNLASLPLTAMNRLWKPLFKLIACNGGTTDQLNAQFSEYLSALLALLQLDDNVWQLQQSEAQAQTPLSLQLLHSCRELYKNQTAQNNVLQLLYNYLKLLNTQSADLKRSYIDLAKKFVHFFEHKAVSHVQEQWYLDFLFVLVRVQKHLHQIDNKVPSLERFWQCLGGQDSATAYAAHFELLQCLTSRVMKIGRGSPLAASCSGNDASCPSVLKHCVFTLGCCATVAYSSWQPEAQATLPKASQLCLASIIHYAIDVAKVTKCLTPNSSELVTFAWYLINMAEKVTTATQMYLLEHLLKPLQELRPLLSPPYAQQLVRRLFKASAHSSNPELSALLHGAYIVSMSCPARQFQQLCVFYHTPKNDTEQCLLELCEKSPLCSPLNATEKRKLYELDMLAVLANKKTPKLLQSLLRHCQTDYQMVLLGRQMRTDKRSAGQQIEELRVRLQRLGRKQQLTRLQQLILGHATVTKLLEAAETQKIKIHIKEMTEKTLEVLLVKYKLFDLTISSEMPLLELATTAIGAFESFYEQADAEPLSSDEALIDWEALIDDGIAAAMALSTMGYIPQADNAWLLLLRICRLLGDRFNYLRALSHFLPRYTQHALFDLPAEVSHAEQLLDELWPQLHAAHLLKRHHTTVLLCLCNLALYYARLDCVRHAQLLLLHAQRLRLEFEERAGKCDIIQLTIQTVRFRMCYQQRHCRSLARLPTALQQLDTLTESVRSFTCISSMDNGALILLLGDMVRDTTECTANRLSELPNFSNSLLQLLLQSGLVLRAVELLISWLWTNLRMECLDKAHSKLRLIEHFLGMQPLLESRAALEQTSNKGSLTLAPMDAQSKHMTELVGKMLVMQLEQSGACVEPIRKQQQLTMSSPRRELPLPSARPKLQRYVSLDMQQSHPMLRSSVQLQCIYFMAGCLHARLYFLNREHEQLDDFYALANAWLQQNAARGNALGHMLLVLHIYQANYLRARRRQQQAIELTETALKLAGSEQLQQRIDVNYRYNLLLQLRTAQLELEPPSKPQNPRRALTFNISPEEKLPRPVRKVATASKKPAKFAIYTEDVRPASSTTSSSSSSSSSENASSPERKSTKSKSPKRLDLNACQLIDIIDLSDDETEAVVQLQPAKSTSALSTRSTRTRAQRQPDTLVAPLRRTATAPNPLSAEATPKTIGTRARARRQNTAEQPTTTTTATPKVDSVSSRRRHRN.

The tract at residues 1065-1071 (VEPIRKQ) is separase cleavage-site. 3 disordered regions span residues 1221–1240 (LEPP…NISP), 1268–1301 (VRPA…KSPK), and 1330–1411 (AKST…RHRN). Low complexity-rich tracts occupy residues 1270-1289 (PASS…NASS) and 1386-1398 (TAEQ…TATP).

In terms of assembly, interacts with pim and Sse. Cleavage of thr contributes to inactivation of Sse.

Its subcellular location is the cytoplasm. Functionally, required specifically for chromosome disjunction during all mitoses; maternally provided protein is sufficient until mitosis 14 then zygotic protein is required. Involved in formation and/or maintenance of epithelial structures: bud extension during Malpighian tubule development, and foregut and hindgut morphogenesis. The polypeptide is Protein three rows (thr) (Drosophila virilis (Fruit fly)).